The sequence spans 392 residues: Phosphoglycerate kinase (392 aa).

Substrate contacts are provided by residues 21-23, Arg-36, 59-62, Arg-113, and Arg-146; these read DLN and HRGR. ATP-binding positions include Lys-197, Glu-314, and 340–343; that span reads GGDT.

The protein belongs to the phosphoglycerate kinase family. Monomer.

It localises to the cytoplasm. The catalysed reaction is (2R)-3-phosphoglycerate + ATP = (2R)-3-phospho-glyceroyl phosphate + ADP. It functions in the pathway carbohydrate degradation; glycolysis; pyruvate from D-glyceraldehyde 3-phosphate: step 2/5. This is Phosphoglycerate kinase from Vesicomyosocius okutanii subsp. Calyptogena okutanii (strain HA).